Consider the following 105-residue polypeptide: Iron-sulfur cluster assembly protein CyaY (105 aa).

It belongs to the frataxin family.

Involved in iron-sulfur (Fe-S) cluster assembly. May act as a regulator of Fe-S biogenesis. This chain is Iron-sulfur cluster assembly protein CyaY, found in Paraburkholderia xenovorans (strain LB400).